The sequence spans 785 residues: Protein kintoun (785 aa).

2 stretches are compositionally biased toward basic and acidic residues: residues 622–638 and 662–679; these read EHNE…RDTS and HNIE…KEPK. Disordered stretches follow at residues 622 to 698 and 719 to 749; these read EHNE…DSHL and KSSV…ASSN. A compositionally biased stretch (polar residues) spans 681-695; that stretch reads TSCTAESTSGQQPND. Positions 728–737 are enriched in acidic residues; the sequence is SDLDEDDMPD.

This sequence belongs to the PIH1 family. Kintoun subfamily.

The protein localises to the cytoplasm. The protein resides in the dynein axonemal particle. Its function is as follows. Required for cytoplasmic pre-assembly of axonemal dyneins, thereby playing a central role in motility in cilia and flagella. Involved in pre-assembly of dynein arm complexes in the cytoplasm before intraflagellar transport loads them for the ciliary compartment. This chain is Protein kintoun, found in Xenopus tropicalis (Western clawed frog).